We begin with the raw amino-acid sequence, 206 residues long: Probable N-acetyltransferase 14 (206 aa).

Residues 55–206 (LRFVLASFAL…TLVREFSKEL (152 aa)) form the N-acetyltransferase domain. A helical transmembrane segment spans residues 57–77 (FVLASFALALLLPVFLAVAAM).

This sequence belongs to the camello family.

The protein resides in the membrane. Functionally, probable acetyltransferase. In terms of biological role, may act as a transcription factor regulating the expression of coproporphyrinogen oxidase by binding to a promoter regulatory element. This is Probable N-acetyltransferase 14 from Bos taurus (Bovine).